The chain runs to 68 residues: Peptide Hp1090 (68 aa).

A signal peptide spans Met-1–Ala-23. The residue at position 36 (Phe-36) is a Phenylalanine amide. Residues Gly-40–Gln-68 constitute a propeptide that is removed on maturation.

This sequence belongs to the non-disulfide-bridged peptide (NDBP) superfamily. Short antimicrobial peptide (group 4) family. As to expression, expressed by the venom gland.

Its subcellular location is the secreted. It localises to the target cell membrane. Amphipathic peptide which inhibits the growth of Gram-positive bacteria. The polypeptide is Peptide Hp1090 (Heterometrus petersii (Asian forest scorpion)).